A 415-amino-acid chain; its full sequence is Serine hydroxymethyltransferase (415 aa).

(6S)-5,6,7,8-tetrahydrofolate is bound by residues leucine 118 and 122–124 (GHL). Lysine 227 bears the N6-(pyridoxal phosphate)lysine mark.

The protein belongs to the SHMT family. Homodimer. Pyridoxal 5'-phosphate serves as cofactor.

The protein localises to the cytoplasm. The catalysed reaction is (6R)-5,10-methylene-5,6,7,8-tetrahydrofolate + glycine + H2O = (6S)-5,6,7,8-tetrahydrofolate + L-serine. The protein operates within one-carbon metabolism; tetrahydrofolate interconversion. Its pathway is amino-acid biosynthesis; glycine biosynthesis; glycine from L-serine: step 1/1. Functionally, catalyzes the reversible interconversion of serine and glycine with tetrahydrofolate (THF) serving as the one-carbon carrier. This reaction serves as the major source of one-carbon groups required for the biosynthesis of purines, thymidylate, methionine, and other important biomolecules. Also exhibits THF-independent aldolase activity toward beta-hydroxyamino acids, producing glycine and aldehydes, via a retro-aldol mechanism. This is Serine hydroxymethyltransferase from Elusimicrobium minutum (strain Pei191).